A 763-amino-acid polypeptide reads, in one-letter code: Translation initiation factor IF-2 (763 aa).

The interval 52-178 (KQKKVQTSQN…KDEAIKHETK (127 aa)) is disordered. Over residues 65–82 (SNDENKKITNKNTEKTTE) the composition is skewed to basic and acidic residues. Polar residues predominate over residues 86 to 96 (TVDSNKQNNSN). Basic and acidic residues-rich tracts occupy residues 105-116 (RNNDEESVSHFD) and 123-135 (KSEM…LNDK). A compositionally biased stretch (basic residues) spans 136–145 (KKNKNFKNTK). Residues 146-161 (NKNSNNNKNSKNNKNN) show a composition bias toward low complexity. The segment covering 162-178 (KNNDHNRKDEAIKHETK) has biased composition (basic and acidic residues). A tr-type G domain is found at 265–434 (ERPPVITVMG…LMVAEMEELK (170 aa)). Residues 274–281 (GHVDHGKT) form a G1 region. Residue 274-281 (GHVDHGKT) participates in GTP binding. A G2 region spans residues 299–303 (GITQH). The segment at 320–323 (DTPG) is G3. Residues 320–324 (DTPGH) and 374–377 (NKID) each bind GTP. A G4 region spans residues 374-377 (NKID). Residues 410–412 (SAR) are G5.

The protein belongs to the TRAFAC class translation factor GTPase superfamily. Classic translation factor GTPase family. IF-2 subfamily.

The protein resides in the cytoplasm. Functionally, one of the essential components for the initiation of protein synthesis. Protects formylmethionyl-tRNA from spontaneous hydrolysis and promotes its binding to the 30S ribosomal subunits. Also involved in the hydrolysis of GTP during the formation of the 70S ribosomal complex. In Finegoldia magna (strain ATCC 29328 / DSM 20472 / WAL 2508) (Peptostreptococcus magnus), this protein is Translation initiation factor IF-2.